Consider the following 340-residue polypeptide: MSELDQLRQEAEQLKNQIRDARKACADATLSXITTNIDPVGRIQMRTRRTLRGHLAKIYAMHWGTDSRLLVSASQDGKLIIWDSYTTNKVHAIPLRSSWVMTCAYAPSGNYVACGGLDNICSIYNLKTREGNVRVSRELAGHTGYLSCCRFLNDNQIVTSSEDTTCALWDIETGQQTTTFTGHTGDVMSLSLAPDTRLFVSGACDASAKLWDVREGMCRQTFTGHESDINAICFFPNGNAFATGSDDATCRLFDLRADQELMTYSHDNIICGITSVSFSKSGRLLLAGYDDFNCNVWDALKADRAGVLAGHDNRVSCLGVTDDGMAVATGSWDSFLKIWN.

S2 carries the post-translational modification N-acetylserine. Residue S2 is modified to Phosphoserine. 7 WD repeats span residues 46-94 (RTRR…HAIP), 95-140 (LRSS…RELA), 141-181 (GHTG…TTFT), 182-223 (GHTG…QTFT), 224-267 (GHES…YSHD), 268-309 (NIIC…GVLA), and 310-340 (GHDN…KIWN). H266 is subject to Phosphohistidine.

This sequence belongs to the WD repeat G protein beta family. G proteins are composed of 3 units, alpha, beta and gamma. The heterodimer formed by GNB1 and GNG2 interacts with ARHGEF5. The heterodimer formed by GNB1 and GNG2 interacts with GRK2. Forms a complex with GNAO1 and GNG3. Interacts with ARHGEF18 and RASD2. Forms complexes with TAS2R14 and G-proteins; these complexes play a role in the perception of bitterness. Component of the TAS2R14-GNAI1 complex, consisting of TAS2R14, GNAI1, GNB1 and GNG2. Component of the TAS2R14-GNAT3 complex, consisting of TAS2R14, GNAT3, GNB1 and GNG2. Component of the TAS2R14-GNAS2 complex, consisting of TAS2R14, GNAS2, GNB1 and GNG2. In terms of processing, phosphorylation at His-266 by NDKB contributes to G protein activation by increasing the high energetic phosphate transfer onto GDP.

In terms of biological role, guanine nucleotide-binding proteins (G proteins) are involved as a modulator or transducer in various transmembrane signaling systems. The beta and gamma chains are required for the GTPase activity, for replacement of GDP by GTP, and for G protein-effector interaction. The chain is Guanine nucleotide-binding protein G(I)/G(S)/G(T) subunit beta-1 (GNB1) from Cricetulus griseus (Chinese hamster).